We begin with the raw amino-acid sequence, 758 residues long: Maturase-like protein 2 (758 aa).

It localises to the plastid. Its subcellular location is the chloroplast. This Euglena gracilis protein is Maturase-like protein 2 (mat2).